The following is a 50-amino-acid chain: Mast cell degranulating peptide (50 aa).

The first 27 residues, 1–27 (MISMLRCTFFFLSVILITSYFVTPTMS), serve as a signal peptide directing secretion. Lys29 is modified (N6-formyllysine; partial). 2 disulfide bridges follow: Cys30/Cys42 and Cys32/Cys46. Lys44 and Lys48 each carry N6-formyllysine; partial. An Asparagine amide modification is found at Asn49.

Expressed by the venom gland.

It is found in the secreted. In terms of biological role, potent anti-inflammatory agent. At low concentrations, mediates the degranulation of mast cells thus evoking an inflammatory response. Also acts as a neurotoxin capable of blocking a class of voltage-gated potassium channels. The polypeptide is Mast cell degranulating peptide (Apis mellifera (Honeybee)).